The following is a 99-amino-acid chain: UPF0235 protein Sbal223_1335 (99 aa).

It belongs to the UPF0235 family.

This chain is UPF0235 protein Sbal223_1335, found in Shewanella baltica (strain OS223).